Consider the following 120-residue polypeptide: Large ribosomal subunit protein uL14 (120 aa).

It belongs to the universal ribosomal protein uL14 family. In terms of assembly, part of the 50S ribosomal subunit. Forms a cluster with proteins L3 and L19. In the 70S ribosome, L14 and L19 interact and together make contacts with the 16S rRNA in bridges B5 and B8.

Functionally, binds to 23S rRNA. Forms part of two intersubunit bridges in the 70S ribosome. In Karelsulcia muelleri (strain GWSS) (Sulcia muelleri), this protein is Large ribosomal subunit protein uL14.